We begin with the raw amino-acid sequence, 189 residues long: Interferon alpha-6 (189 aa).

The signal sequence occupies residues 1 to 23; the sequence is MARLCAFLMVLAVLSYWPTCSLG. 2 disulfide bridges follow: Cys24–Cys122 and Cys52–Cys162. Residue Asn101 is glycosylated (N-linked (GlcNAc...) asparagine).

The protein belongs to the alpha/beta interferon family.

Its subcellular location is the secreted. Functionally, produced by macrophages, IFN-alpha have antiviral activities. Interferon stimulates the production of two enzymes: a protein kinase and an oligoadenylate synthetase. The sequence is that of Interferon alpha-6 (Ifna6) from Mus musculus (Mouse).